A 222-amino-acid polypeptide reads, in one-letter code: uncharacterized protein (222 aa).

The chain crosses the membrane as a helical span at residues 7–26 (ICLVSLICISGIYFGYQYYQ). Positions 139–222 (CRSNAGYKVQ…AYNKQSCVLK (84 aa)) constitute an SPOR domain.

The protein localises to the membrane. This is an uncharacterized protein from Rickettsia prowazekii (strain Madrid E).